The chain runs to 856 residues: DNA mismatch repair protein MutS (856 aa).

Position 617-624 (617-624 (GPNMGGKS)) interacts with ATP.

This sequence belongs to the DNA mismatch repair MutS family.

In terms of biological role, this protein is involved in the repair of mismatches in DNA. It is possible that it carries out the mismatch recognition step. This protein has a weak ATPase activity. The polypeptide is DNA mismatch repair protein MutS (Psychromonas ingrahamii (strain DSM 17664 / CCUG 51855 / 37)).